Consider the following 714-residue polypeptide: Protein artemis (714 aa).

Disordered regions lie at residues 391–500, 516–577, 598–617, and 638–683; these read ELFD…ESNA, ESSE…TVLI, ALLSHDTPRDSQADDSRWKL, and EKDA…LTPD. A compositionally biased stretch (polar residues) spans 427-440; it reads NESTESYRANTAYT. The segment covering 447–468 has biased composition (acidic residues); sequence VDCEESNDDDDDDDDDDKEDDS. 2 stretches are compositionally biased toward polar residues: residues 484-500 and 532-543; these read SIASCNGIPSNQQESNA and GSQSLFSDSDGV. The segment covering 544 to 561 has biased composition (low complexity); the sequence is SDSTHISSQNSSQSTHIS. Residues 562–577 show a composition bias toward polar residues; it reads EQGSQGWDSQMDTVLI. 2 stretches are compositionally biased toward basic and acidic residues: residues 603–615 and 660–670; these read DTPRDSQADDSRW and RTPDLELKRDS. At Ser-670 the chain carries Phosphoserine; by ATM.

This sequence belongs to the DNA repair metallo-beta-lactamase (DRMBL) family. As to quaternary structure, interacts with PRKDC. Phosphorylation on undefined residues by PRKDC may stimulate endonucleolytic activity on 5' and 3' hairpins and overhangs. PRKDC must remain present, even after phosphorylation, for efficient hairpin opening.

It is found in the nucleus. Required for V(D)J recombination, the process by which exons encoding the antigen-binding domains of immunoglobulins and T-cell receptor proteins are assembled from individual V, (D), and J gene segments. V(D)J recombination is initiated by the lymphoid specific RAG endonuclease complex, which generates site specific DNA double strand breaks (DSBs). These DSBs present two types of DNA end structures: hairpin sealed coding ends and phosphorylated blunt signal ends. These ends are independently repaired by the non homologous end joining (NHEJ) pathway to form coding and signal joints respectively. This protein exhibits single-strand specific 5'-3' exonuclease activity in isolation, and acquires endonucleolytic activity on 5' and 3' hairpins and overhangs when in a complex with PRKDC. The latter activity is required specifically for the resolution of closed hairpins prior to the formation of the coding joint. May also be required for the repair of complex DSBs induced by ionizing radiation, which require substantial end-processing prior to religation by NHEJ. The sequence is that of Protein artemis (DCLRE1C) from Gallus gallus (Chicken).